We begin with the raw amino-acid sequence, 277 residues long: Large ribosomal subunit protein uL2m (277 aa).

A disordered region spans residues 225–263 (AMNPVDHPHGGGEGKTSGGRPSVTPWSWPTKGQPTRSKR). The segment covering 248–259 (TPWSWPTKGQPT) has biased composition (polar residues).

This sequence belongs to the universal ribosomal protein uL2 family.

The protein resides in the mitochondrion. This chain is Large ribosomal subunit protein uL2m (RPL2), found in Reclinomonas americana.